The following is a 92-amino-acid chain: UPF0250 protein XAC0666 (92 aa).

This sequence belongs to the UPF0250 family.

The chain is UPF0250 protein XAC0666 from Xanthomonas axonopodis pv. citri (strain 306).